Here is a 425-residue protein sequence, read N- to C-terminus: MEIVKIIGREILDSRGNPTVEVDVHLACGIIGRAAVPSGASTGENEAIELRDQDKARYCGKGVLKAVKNVNEVIDPALCGMSVLEQTAIDRKLIELDGTKTKSNLGANAMLGVSLAVAKAAAAYLDIPLYRYIGGSNTYVLPVPMMNIINGGSHSDAPIAFQEFMIRPVGACCFREGLRMGAEVFHALKKVLHDRGLSTAVGDEGGFAPALNGTEDAIESILKAVEAAGYVPGKDITIAMDCASSEFFKDGIYDYTKFEGEKGKKRSIDEQVAYLTELVGKYPIDSIEDGMSENDWEGWKKLTVALGDKVQLVGDDLFVTNVEFLRRGIAEKCGNSILIKVNQIGTLTETLNAIEMAHRHGFTSVTSHRSGETEDTTIADIAVATNSGQIKTGSLSRTDRMAKYNQLLRIEEELGPCAVYGYKKV.

Gln162 contributes to the (2R)-2-phosphoglycerate binding site. Residue Glu204 is the Proton donor of the active site. Mg(2+) contacts are provided by Asp241, Glu288, and Asp315. Residues Lys340, Arg369, Ser370, and Lys391 each contribute to the (2R)-2-phosphoglycerate site. Catalysis depends on Lys340, which acts as the Proton acceptor.

This sequence belongs to the enolase family. It depends on Mg(2+) as a cofactor.

The protein localises to the cytoplasm. It is found in the secreted. The protein resides in the cell surface. The catalysed reaction is (2R)-2-phosphoglycerate = phosphoenolpyruvate + H2O. The protein operates within carbohydrate degradation; glycolysis; pyruvate from D-glyceraldehyde 3-phosphate: step 4/5. In terms of biological role, catalyzes the reversible conversion of 2-phosphoglycerate (2-PG) into phosphoenolpyruvate (PEP). It is essential for the degradation of carbohydrates via glycolysis. In Porphyromonas gingivalis (strain ATCC 33277 / DSM 20709 / CIP 103683 / JCM 12257 / NCTC 11834 / 2561), this protein is Enolase.